A 456-amino-acid chain; its full sequence is Anthocyanidin 3-O-galactosyltransferase F3GT1 (456 aa).

An anthocyanidin-binding residues include Ser-20, His-22, and Gln-83. His-22 functions as the Proton acceptor in the catalytic mechanism. The active-site Charge relay is the Asp-118. His-150 lines the an anthocyanidin pocket. The UDP site is built by Ser-281, Trp-333, Ala-334, His-351, Asn-355, Ser-356, and Glu-359. An anthocyanidin is bound at residue Gly-374.

The protein belongs to the UDP-glycosyltransferase family. Expressed at low levels in stems and leaves. Expressed in ovaries.

The enzyme catalyses cyanidin + UDP-alpha-D-galactose = cyanidin 3-O-beta-D-galactoside + UDP + H(+). It participates in pigment biosynthesis; anthocyanin biosynthesis. Its function is as follows. Involved in anthocyanin biosynthesis by catalyzing the galactosylation of cyanidin. Required for the accumulation of anthocyanin in red-fleshed kiwifruit varieties. Seems to be the key enzyme regulating the accumulation of anthocyanin in red-fleshed kiwi fruits. This is Anthocyanidin 3-O-galactosyltransferase F3GT1 from Actinidia chinensis var. chinensis (Chinese soft-hair kiwi).